A 196-amino-acid polypeptide reads, in one-letter code: MVKSFYGYVRDAWKNPDETYVNELRWERLQVWRKQGSVTRIERPTRIDRARSLGYKAKQGIVVVRVNVRRGGLGHVRPNRGRRTQKMGKNKVSGGMSIQRIAEVRADRRYPNLEVLNSYWVGEDGKHKWFEVILVDPHHPVIKSDKNLNWVCDPSSRGRATRGKTSAGRKGRGMATRGKGTEKTRPSIRAYKSRGK.

Positions 153-196 (DPSSRGRATRGKTSAGRKGRGMATRGKGTEKTRPSIRAYKSRGK) are disordered. A compositionally biased stretch (basic residues) spans 159 to 172 (RATRGKTSAGRKGR).

It belongs to the eukaryotic ribosomal protein eL15 family.

This chain is Large ribosomal subunit protein eL15, found in Methanosarcina acetivorans (strain ATCC 35395 / DSM 2834 / JCM 12185 / C2A).